A 215-amino-acid chain; its full sequence is Urease accessory protein UreG (215 aa).

A GTP-binding site is contributed by 15-22 (GPVGSGKT).

The protein belongs to the SIMIBI class G3E GTPase family. UreG subfamily. In terms of assembly, homodimer. UreD, UreF and UreG form a complex that acts as a GTP-hydrolysis-dependent molecular chaperone, activating the urease apoprotein by helping to assemble the nickel containing metallocenter of UreC. The UreE protein probably delivers the nickel.

The protein resides in the cytoplasm. Its function is as follows. Facilitates the functional incorporation of the urease nickel metallocenter. This process requires GTP hydrolysis, probably effectuated by UreG. This is Urease accessory protein UreG from Alcanivorax borkumensis (strain ATCC 700651 / DSM 11573 / NCIMB 13689 / SK2).